The chain runs to 464 residues: Protein FAM90A3 (464 aa).

3 disordered regions span residues M1–L42, P70–A389, and A411–P437. 2 stretches are compositionally biased toward basic and acidic residues: residues G74 to V89 and N97 to R114. Residues L180 to L197 show a composition bias toward low complexity.

The protein belongs to the FAM90 family.

The polypeptide is Protein FAM90A3 (Homo sapiens (Human)).